A 436-amino-acid chain; its full sequence is Coiled-coil domain-containing protein 71 (436 aa).

Positions 95–119 (ATSLPARAPQTAKSVPTGQTTLLPV) are disordered. Residues 105 to 116 (TAKSVPTGQTTL) show a composition bias toward polar residues. Ser129 carries the post-translational modification Phosphoserine. Disordered stretches follow at residues 210 to 258 (LRKG…MKGR) and 314 to 405 (ALRG…KVDR). Residues 264–334 (KTVRGKAPRT…QAKAKAARTK (71 aa)) adopt a coiled-coil conformation. Positions 329 to 340 (KAARTKHKKRPK) are enriched in basic residues. A compositionally biased stretch (polar residues) spans 344–359 (QTRTGRTSLKNSSETV). Positions 373–386 (PPKKRARCVPRSKA) are enriched in basic residues.

The chain is Coiled-coil domain-containing protein 71 (Ccdc71) from Rattus norvegicus (Rat).